Consider the following 262-residue polypeptide: Acyl-[acyl-carrier-protein]--UDP-N-acetylglucosamine O-acyltransferase (262 aa).

The protein belongs to the transferase hexapeptide repeat family. LpxA subfamily. Homotrimer.

The protein resides in the cytoplasm. The enzyme catalyses a (3R)-hydroxyacyl-[ACP] + UDP-N-acetyl-alpha-D-glucosamine = a UDP-3-O-[(3R)-3-hydroxyacyl]-N-acetyl-alpha-D-glucosamine + holo-[ACP]. It participates in glycolipid biosynthesis; lipid IV(A) biosynthesis; lipid IV(A) from (3R)-3-hydroxytetradecanoyl-[acyl-carrier-protein] and UDP-N-acetyl-alpha-D-glucosamine: step 1/6. In terms of biological role, involved in the biosynthesis of lipid A, a phosphorylated glycolipid that anchors the lipopolysaccharide to the outer membrane of the cell. The polypeptide is Acyl-[acyl-carrier-protein]--UDP-N-acetylglucosamine O-acyltransferase (Janthinobacterium sp. (strain Marseille) (Minibacterium massiliensis)).